We begin with the raw amino-acid sequence, 130 residues long: MAKPAKKTGPKKAKRNVPNGVAHIQSTFNNTIVSITDTSGEVISWSSAGASGFKGARKGTPFAAQTAAEAAARRALDQGMRQIEVLVKGPGSGRETAIRALQVAGLEITLIRDVTPLPHNGCRRPKRRRV.

It belongs to the universal ribosomal protein uS11 family. In terms of assembly, part of the 30S ribosomal subunit. Interacts with proteins S7 and S18. Binds to IF-3.

Located on the platform of the 30S subunit, it bridges several disparate RNA helices of the 16S rRNA. Forms part of the Shine-Dalgarno cleft in the 70S ribosome. This chain is Small ribosomal subunit protein uS11, found in Parasynechococcus marenigrum (strain WH8102).